Consider the following 319-residue polypeptide: Chromoplast-specific carotenoid-associated protein C1, chromoplastic (319 aa).

The N-terminal 55 residues, 1–55, are a transit peptide targeting the chromoplast; the sequence is MTSIAFWNAFTVNPFPAAARRSPPPLTPFTSGALSPARKPRILEISHPRTLPSFR.

It belongs to the PAP/fibrillin family. As to expression, expressed in flower buds and floral lip tissues. Not detected in roots and leaves. Specifically expressed in conical papillate cells of adaxial epidermis of lip tissues.

It localises to the plastid. Its subcellular location is the chromoplast. Functionally, may be involved in carotenoid sequestration within chromoplasts. The protein is Chromoplast-specific carotenoid-associated protein C1, chromoplastic (CHRC1) of Oncidium hybrid cultivar (Orchid).